The chain runs to 452 residues: Bifunctional protein GlmU (452 aa).

The pyrophosphorylase stretch occupies residues M1–R226. UDP-N-acetyl-alpha-D-glucosamine-binding positions include L8–G11, K22, Q73, G78–T79, Y100–D102, G137, E151, N166, and N224. D102 contributes to the Mg(2+) binding site. Residue N224 participates in Mg(2+) binding. Residues L227–S247 form a linker region. Positions G248–K452 are N-acetyltransferase. The UDP-N-acetyl-alpha-D-glucosamine site is built by R330 and K348. The active-site Proton acceptor is H360. Positions 363 and 374 each coordinate UDP-N-acetyl-alpha-D-glucosamine. Residues A377, N383 to Y384, S402, A420, and R437 contribute to the acetyl-CoA site.

In the N-terminal section; belongs to the N-acetylglucosamine-1-phosphate uridyltransferase family. It in the C-terminal section; belongs to the transferase hexapeptide repeat family. Homotrimer. It depends on Mg(2+) as a cofactor.

The protein localises to the cytoplasm. It carries out the reaction alpha-D-glucosamine 1-phosphate + acetyl-CoA = N-acetyl-alpha-D-glucosamine 1-phosphate + CoA + H(+). It catalyses the reaction N-acetyl-alpha-D-glucosamine 1-phosphate + UTP + H(+) = UDP-N-acetyl-alpha-D-glucosamine + diphosphate. It participates in nucleotide-sugar biosynthesis; UDP-N-acetyl-alpha-D-glucosamine biosynthesis; N-acetyl-alpha-D-glucosamine 1-phosphate from alpha-D-glucosamine 6-phosphate (route II): step 2/2. Its pathway is nucleotide-sugar biosynthesis; UDP-N-acetyl-alpha-D-glucosamine biosynthesis; UDP-N-acetyl-alpha-D-glucosamine from N-acetyl-alpha-D-glucosamine 1-phosphate: step 1/1. It functions in the pathway bacterial outer membrane biogenesis; LPS lipid A biosynthesis. In terms of biological role, catalyzes the last two sequential reactions in the de novo biosynthetic pathway for UDP-N-acetylglucosamine (UDP-GlcNAc). The C-terminal domain catalyzes the transfer of acetyl group from acetyl coenzyme A to glucosamine-1-phosphate (GlcN-1-P) to produce N-acetylglucosamine-1-phosphate (GlcNAc-1-P), which is converted into UDP-GlcNAc by the transfer of uridine 5-monophosphate (from uridine 5-triphosphate), a reaction catalyzed by the N-terminal domain. The polypeptide is Bifunctional protein GlmU (Psychromonas ingrahamii (strain DSM 17664 / CCUG 51855 / 37)).